A 215-amino-acid polypeptide reads, in one-letter code: Probable transaldolase (215 aa).

The active-site Schiff-base intermediate with substrate is Lys-83.

This sequence belongs to the transaldolase family. Type 3B subfamily.

The protein localises to the cytoplasm. It catalyses the reaction D-sedoheptulose 7-phosphate + D-glyceraldehyde 3-phosphate = D-erythrose 4-phosphate + beta-D-fructose 6-phosphate. It participates in carbohydrate degradation; pentose phosphate pathway; D-glyceraldehyde 3-phosphate and beta-D-fructose 6-phosphate from D-ribose 5-phosphate and D-xylulose 5-phosphate (non-oxidative stage): step 2/3. In terms of biological role, transaldolase is important for the balance of metabolites in the pentose-phosphate pathway. In Clostridium perfringens (strain 13 / Type A), this protein is Probable transaldolase.